The chain runs to 296 residues: Glycine--tRNA ligase alpha subunit (296 aa).

It belongs to the class-II aminoacyl-tRNA synthetase family. As to quaternary structure, tetramer of two alpha and two beta subunits.

The protein resides in the cytoplasm. It carries out the reaction tRNA(Gly) + glycine + ATP = glycyl-tRNA(Gly) + AMP + diphosphate. In Synechococcus sp. (strain CC9605), this protein is Glycine--tRNA ligase alpha subunit.